The primary structure comprises 240 residues: Lactate utilization protein C (240 aa).

This sequence belongs to the LutC/YkgG family.

Its function is as follows. Is involved in L-lactate degradation and allows cells to grow with lactate as the sole carbon source. This Bacillus pumilus (strain SAFR-032) protein is Lactate utilization protein C.